A 63-amino-acid chain; its full sequence is Cytochrome b-c1 complex subunit 9 (63 aa).

At 2-21 (AAATLTSKLYSLLFRRTSTF) the chain is on the mitochondrial matrix side. Residues 22-47 (ALTIIVGVMFFERAFDQGADAIYDHI) traverse the membrane as a helical segment. Topologically, residues 48-63 (NEGKLWKHIKHKYENK) are mitochondrial intermembrane.

The protein belongs to the UQCR10/QCR9 family. Component of the ubiquinol-cytochrome c oxidoreductase (cytochrome b-c1 complex, complex III, CIII), a multisubunit enzyme composed of 11 subunits. The complex is composed of 3 respiratory subunits cytochrome b, cytochrome c1 and Rieske protein UQCRFS1, 2 core protein subunits UQCRC1/QCR1 and UQCRC2/QCR2, and 6 low-molecular weight protein subunits UQCRH/QCR6, UQCRB/QCR7, UQCRQ/QCR8, UQCR10/QCR9, UQCR11/QCR10 and subunit 9, the cleavage product of Rieske protein UQCRFS1. The complex exists as an obligatory dimer and forms supercomplexes (SCs) in the inner mitochondrial membrane with NADH-ubiquinone oxidoreductase (complex I, CI) and cytochrome c oxidase (complex IV, CIV), resulting in different assemblies (supercomplex SCI(1)III(2)IV(1) and megacomplex MCI(2)III(2)IV(2)). Interacts with STMP1.

It localises to the mitochondrion inner membrane. Component of the ubiquinol-cytochrome c oxidoreductase, a multisubunit transmembrane complex that is part of the mitochondrial electron transport chain which drives oxidative phosphorylation. The respiratory chain contains 3 multisubunit complexes succinate dehydrogenase (complex II, CII), ubiquinol-cytochrome c oxidoreductase (cytochrome b-c1 complex, complex III, CIII) and cytochrome c oxidase (complex IV, CIV), that cooperate to transfer electrons derived from NADH and succinate to molecular oxygen, creating an electrochemical gradient over the inner membrane that drives transmembrane transport and the ATP synthase. The cytochrome b-c1 complex catalyzes electron transfer from ubiquinol to cytochrome c, linking this redox reaction to translocation of protons across the mitochondrial inner membrane, with protons being carried across the membrane as hydrogens on the quinol. In the process called Q cycle, 2 protons are consumed from the matrix, 4 protons are released into the intermembrane space and 2 electrons are passed to cytochrome c. The polypeptide is Cytochrome b-c1 complex subunit 9 (UQCR10) (Homo sapiens (Human)).